Consider the following 603-residue polypeptide: Glutathione-regulated potassium-efflux system protein KefB (603 aa).

Transmembrane regions (helical) follow at residues 5 to 25, 29 to 49, 55 to 75, 87 to 107, 115 to 135, 152 to 172, 180 to 202, 207 to 227, 230 to 250, 268 to 288, 291 to 311, 326 to 346, and 356 to 376; these read ALLT…PIAA, IGAV…GLGF, AILH…GLEL, IFGV…GALY, SALI…LQLM, VLLF…ILAG, WERI…YLVR, FIAA…LVLG, LFME…GILL, GLLL…GILY, IVKI…VLYF, FAGV…AAAS, and PLLL…MQLI. An RCK N-terminal domain is found at 400-521; that stretch reads EPQVIVVGFG…VRHFSRETFS (122 aa).

It belongs to the monovalent cation:proton antiporter 2 (CPA2) transporter (TC 2.A.37) family. KefB subfamily. As to quaternary structure, interacts with the regulatory subunit KefG.

It is found in the cell inner membrane. Pore-forming subunit of a potassium efflux system that confers protection against electrophiles. Catalyzes K(+)/H(+) antiport. The sequence is that of Glutathione-regulated potassium-efflux system protein KefB from Pectobacterium carotovorum subsp. carotovorum (strain PC1).